A 428-amino-acid polypeptide reads, in one-letter code: Dihydroorotase (428 aa).

Residues H61 and H63 each contribute to the Zn(2+) site. Substrate is bound by residues 63 to 65 (HLR) and N95. Zn(2+)-binding residues include D153, H180, and H233. N279 provides a ligand contact to substrate. A Zn(2+)-binding site is contributed by D306. D306 is a catalytic residue. Substrate contacts are provided by residues H310 and 324–325 (FG).

The protein belongs to the metallo-dependent hydrolases superfamily. DHOase family. Class I DHOase subfamily. Requires Zn(2+) as cofactor.

It carries out the reaction (S)-dihydroorotate + H2O = N-carbamoyl-L-aspartate + H(+). It participates in pyrimidine metabolism; UMP biosynthesis via de novo pathway; (S)-dihydroorotate from bicarbonate: step 3/3. Catalyzes the reversible cyclization of carbamoyl aspartate to dihydroorotate. This Geobacillus thermodenitrificans (strain NG80-2) protein is Dihydroorotase.